Consider the following 277-residue polypeptide: Protein OPG166 (277 aa).

N29 and N58 each carry an N-linked (GlcNAc...) asparagine; by host glycan. 5 helical membrane passes run 124–144 (TMLM…EITY), 156–176 (GILQ…AFLF), 186–206 (IIGL…KVFS), 219–239 (LIIY…GLSL), and 247–267 (LLLS…LFLV).

Belongs to the orthopoxvirus OPG166 protein family.

Its subcellular location is the host membrane. Its function is as follows. Promotes, when overexpressed, the influx of extracellular Ca(2+), leading to membrane permeability and host cell necrosis. The chain is Protein OPG166 (OPG166) from Vaccinia virus (strain Copenhagen) (VACV).